Consider the following 422-residue polypeptide: Zinc finger protein Gfi-1 (422 aa).

The SNAG domain stretch occupies residues 1-20 (MPRSFLVKSKKAHSYHQPRS). The interval 1–109 (MPRSFLVKSK…ASEKSMCPSL (109 aa)) is disordered. Residues Ser-20 and Ser-56 each carry the phosphoserine modification. Positions 140–257 (RPCGALERGA…LLLGGGSYKC (118 aa)) are required for interaction with RELA. C2H2-type zinc fingers lie at residues 255 to 278 (YKCIKCSKVFSTPHGLEVHVRRSH), 284 to 306 (FACEMCGKTFGHAVSLEQHKAVH), 312 to 334 (FDCKICGKSFKRSSTLSTHLLIH), 340 to 362 (YPCQYCGKRFHQKSDMKKHTFIH), 368 to 390 (HKCQVCGKAFSQSSNLITHSRKH), and 396 to 419 (FGCDLCGKGFQRKVDLRRHRETQH).

Interacts with U2AF1L4. Component of RCOR-GFI-KDM1A-HDAC complexes. Interacts directly with RCOR1, KDM1A and HDAC2. Also interacts with HDAC1. Interacts (via the zinc-finger domain) with ARIH2; the interaction prevents GFI1 ubiquitination and proteasomal degradation. Interacts with PIAS3; the interaction relieves the inhibitory effect of PIAS3 on STAT3-mediated transcriptional activity. Forms a complex with EHMT2 and HDAC1 to promote 'Lys-9' dimethylation of H3 (H3K9Me2) and repress expression of target genes. Interacts directly with EHMT2. Component of the GFI1-AJUBA-HDAC1 repressor complex. Interacts directly with AJUBA (via ITS LIM domains); the interaction results in the HDAC-dependent corepression of a subset of GFI1 target genes and, occurs independently of the SNAG domain. Interacts with SPI1; the interaction inhibits SPI1 transcriptional activity targeted at macrophage-specific genes, repressing macrophage differentiation of myeloid progenitor cells and promoting granulocyte commitment. Interacts with RUNX1T1; the interaction represses HDAC-mediated transcriptional activity. Interacts with RELA; the interaction occurs on liposaccharide (LPS) stimulation and controls RELA DNA binding activity and regulates endotoxin-mediated TOLL-like receptor inflammatory response. Interacts (via the C-terminal zinc fingers) with ZBTB17; the interaction results in the recruitment of GFI1 to the CDKN1A/p21 and CDKN1B promoters and repression of transcription. In terms of processing, ubiquitinated. Ubiquitination and degradation by the proteasome is inhibited by the ubiquitin ligase, ARIH2.

The protein resides in the nucleus. Functionally, transcription repressor essential for hematopoiesis. Functions in a cell-context and development-specific manner. Binds to 5'-TAAATCAC[AT]GCA-3' in the promoter region of a large number of genes. Component of several complexes, including the EHMT2-GFI1-HDAC1, AJUBA-GFI1-HDAC1 and RCOR-GFI-KDM1A-HDAC complexes, that suppress, via histone deacetylase (HDAC) recruitment, a number of genes implicated in multilineage blood cell development. Regulates neutrophil differentiation, promotes proliferation of lymphoid cells, and is required for granulocyte development. Inhibits SPI1 transcriptional activity at macrophage-specific genes, repressing macrophage differentiation of myeloid progenitor cells and promoting granulocyte commitment. Mediates, together with U2AF1L4, the alternative splicing of CD45 and controls T-cell receptor signaling. Regulates the endotoxin-mediated Toll-like receptor (TLR) inflammatory response by antagonizing RELA. Cooperates with CBFA2T2 to regulate ITGB1-dependent neurite growth. Controls cell-cycle progression by repressing CDKNIA/p21 transcription in response to TGFB1 via recruitment of GFI1 by ZBTB17 to the CDKNIA/p21 and CDKNIB promoters. Required for the maintenance of inner ear hair cells. In addition to its role in transcription, acts as a substrate adapter for PRMT1 in the DNA damage response: facilitates the recognition of TP53BP1 and MRE11 substrates by PRMT1, promoting their methylation and the DNA damage response. This is Zinc finger protein Gfi-1 (GFI1) from Homo sapiens (Human).